Reading from the N-terminus, the 207-residue chain is Phosphoribosylglycinamide formyltransferase (207 aa).

Glycine 13–asparagine 15 is a N(1)-(5-phospho-beta-D-ribosyl)glycinamide binding site. (6R)-10-formyltetrahydrofolate is bound by residues methionine 100–leucine 103 and asparagine 120. The active-site Proton donor is histidine 122. Aspartate 162 contributes to the (6R)-10-formyltetrahydrofolate binding site. Glutamate 191 contacts N(1)-(5-phospho-beta-D-ribosyl)glycinamide.

This sequence belongs to the GART family.

It catalyses the reaction N(1)-(5-phospho-beta-D-ribosyl)glycinamide + (6R)-10-formyltetrahydrofolate = N(2)-formyl-N(1)-(5-phospho-beta-D-ribosyl)glycinamide + (6S)-5,6,7,8-tetrahydrofolate + H(+). The protein operates within purine metabolism; IMP biosynthesis via de novo pathway; N(2)-formyl-N(1)-(5-phospho-D-ribosyl)glycinamide from N(1)-(5-phospho-D-ribosyl)glycinamide (10-formyl THF route): step 1/1. The polypeptide is Phosphoribosylglycinamide formyltransferase (ade5) (Schizosaccharomyces pombe (strain 972 / ATCC 24843) (Fission yeast)).